A 60-amino-acid polypeptide reads, in one-letter code: Large ribosomal subunit protein bL32 (60 aa).

Positions 1–16 are enriched in basic residues; it reads MAVPKKKTSKSRKNMR. The tract at residues 1 to 20 is disordered; sequence MAVPKKKTSKSRKNMRRAHD.

Belongs to the bacterial ribosomal protein bL32 family.

This is Large ribosomal subunit protein bL32 from Geobacter metallireducens (strain ATCC 53774 / DSM 7210 / GS-15).